The sequence spans 423 residues: Glutamate-1-semialdehyde 2,1-aminomutase (423 aa).

Lysine 266 carries the N6-(pyridoxal phosphate)lysine modification.

It belongs to the class-III pyridoxal-phosphate-dependent aminotransferase family. HemL subfamily. In terms of assembly, homodimer. Pyridoxal 5'-phosphate is required as a cofactor.

It is found in the cytoplasm. It carries out the reaction (S)-4-amino-5-oxopentanoate = 5-aminolevulinate. The protein operates within porphyrin-containing compound metabolism; protoporphyrin-IX biosynthesis; 5-aminolevulinate from L-glutamyl-tRNA(Glu): step 2/2. In Nitratidesulfovibrio vulgaris (strain DP4) (Desulfovibrio vulgaris), this protein is Glutamate-1-semialdehyde 2,1-aminomutase.